A 283-amino-acid polypeptide reads, in one-letter code: Ribosomal RNA small subunit methyltransferase A (283 aa).

6 residues coordinate S-adenosyl-L-methionine: N13, L15, G39, E59, D87, and N108.

This sequence belongs to the class I-like SAM-binding methyltransferase superfamily. rRNA adenine N(6)-methyltransferase family. RsmA subfamily.

The protein resides in the cytoplasm. It carries out the reaction adenosine(1518)/adenosine(1519) in 16S rRNA + 4 S-adenosyl-L-methionine = N(6)-dimethyladenosine(1518)/N(6)-dimethyladenosine(1519) in 16S rRNA + 4 S-adenosyl-L-homocysteine + 4 H(+). In terms of biological role, specifically dimethylates two adjacent adenosines (A1518 and A1519) in the loop of a conserved hairpin near the 3'-end of 16S rRNA in the 30S particle. May play a critical role in biogenesis of 30S subunits. The protein is Ribosomal RNA small subunit methyltransferase A of Helicobacter hepaticus (strain ATCC 51449 / 3B1).